The sequence spans 66 residues: Phylloseptin-H5 (66 aa).

Residues 1–22 form the signal peptide; it reads MAFLKKSLFLVLFLGLVSLSIC. Positions 23–44 are excised as a propeptide; it reads EEEKRETEEEENEQEDDDKSEE. A disordered region spans residues 24 to 44; sequence EEKRETEEEENEQEDDDKSEE. Over residues 30–41 the composition is skewed to acidic residues; sequence EEEENEQEDDDK. Residue F65 is modified to Phenylalanine amide.

As to expression, expressed by the skin glands.

The protein resides in the secreted. Functionally, has antibacterial activity against the Gram-negative bacteria E.coli and P.aeruginosa, and the Gram-positive bacterium S.aureus. No hemolytic activity. The polypeptide is Phylloseptin-H5 (psn7) (Pithecopus hypochondrialis (Orange-legged leaf frog)).